The sequence spans 64 residues: Large ribosomal subunit protein bL35 (64 aa).

Composition is skewed to basic residues over residues 1 to 15 (MPKAKTHSGASKRFR) and 23 to 33 (VRQKANRRHLL). Residues 1 to 47 (MPKAKTHSGASKRFRTTGSGKIVRQKANRRHLLEHKPTSRTRRLDGR) form a disordered region. A compositionally biased stretch (basic and acidic residues) spans 34 to 46 (EHKPTSRTRRLDG).

Belongs to the bacterial ribosomal protein bL35 family.

This Mycobacteroides abscessus (strain ATCC 19977 / DSM 44196 / CCUG 20993 / CIP 104536 / JCM 13569 / NCTC 13031 / TMC 1543 / L948) (Mycobacterium abscessus) protein is Large ribosomal subunit protein bL35.